A 430-amino-acid chain; its full sequence is Paraneoplastic antigen-like protein 8A (430 aa).

Residues 219-228 (WKNTEDHGDP) are compositionally biased toward basic and acidic residues. 3 disordered regions span residues 219 to 270 (WKNT…NSNY), 313 to 364 (DPSD…RKKK), and 392 to 430 (GLGARRAVSVPHDAPASTSRPQKTKLGAFPRVSKDSRKL). Positions 232–250 (LVRRPGGKIRSRRRKQKKN) are enriched in basic residues. Polar residues predominate over residues 261-270 (SQGSNYNSNY).

Belongs to the PNMA family.

The polypeptide is Paraneoplastic antigen-like protein 8A (Mus musculus (Mouse)).